The chain runs to 381 residues: Cobalt-precorrin-5B C(1)-methyltransferase (381 aa).

The protein belongs to the CbiD family.

The enzyme catalyses Co-precorrin-5B + S-adenosyl-L-methionine = Co-precorrin-6A + S-adenosyl-L-homocysteine. Its pathway is cofactor biosynthesis; adenosylcobalamin biosynthesis; cob(II)yrinate a,c-diamide from sirohydrochlorin (anaerobic route): step 6/10. Functionally, catalyzes the methylation of C-1 in cobalt-precorrin-5B to form cobalt-precorrin-6A. The protein is Cobalt-precorrin-5B C(1)-methyltransferase of Prochlorococcus marinus (strain NATL1A).